The primary structure comprises 124 residues: MLKSKIHRATITDACIDYEGSITIDKNLMQAANLLPYEQVHVVNVNNGTRLETYVIEGPAGSGQICLNGAAARMGMKGDKVIILGYSLITEEDTLTHQPNLVYVDSLNRITKVKNGVASRNLEV.

The active-site Schiff-base intermediate with substrate; via pyruvic acid is serine 21. Serine 21 carries the post-translational modification Pyruvic acid (Ser). Threonine 53 is a substrate binding site. Tyrosine 54 acts as the Proton donor in catalysis. Residue 69 to 71 (GAA) participates in substrate binding.

Belongs to the PanD family. Heterooctamer of four alpha and four beta subunits. It depends on pyruvate as a cofactor. Is synthesized initially as an inactive proenzyme, which is activated by self-cleavage at a specific serine bond to produce a beta-subunit with a hydroxyl group at its C-terminus and an alpha-subunit with a pyruvoyl group at its N-terminus.

Its subcellular location is the cytoplasm. It carries out the reaction L-aspartate + H(+) = beta-alanine + CO2. It functions in the pathway cofactor biosynthesis; (R)-pantothenate biosynthesis; beta-alanine from L-aspartate: step 1/1. Functionally, catalyzes the pyruvoyl-dependent decarboxylation of aspartate to produce beta-alanine. The polypeptide is Aspartate 1-decarboxylase (Dehalococcoides mccartyi (strain ATCC BAA-2266 / KCTC 15142 / 195) (Dehalococcoides ethenogenes (strain 195))).